We begin with the raw amino-acid sequence, 224 residues long: E3 ubiquitin-protein ligase TRIM48 (224 aa).

Residues 31 to 72 (CPICMNYFIDPVTIDCGHSFCRPCFYLNWQDIPILTQCFECI) form an RING-type zinc finger. The segment at 104-145 (SEEQMCGIHRETKKMFCEVDRSLLCLLCSSSQEHRYHRHCPA) adopts a B box-type zinc-finger fold. Cys-109, His-112, Cys-131, and His-137 together coordinate Zn(2+).

The protein belongs to the TRIM/RBCC family. In terms of assembly, interacts with PRMT1; the interaction leads to ubiquitination of PRMT1 by TRIM48. Interacts with MAP3K5. Interacts with STRAP.

It localises to the cytoplasm. The protein resides in the cytosol. The enzyme catalyses S-ubiquitinyl-[E2 ubiquitin-conjugating enzyme]-L-cysteine + [acceptor protein]-L-lysine = [E2 ubiquitin-conjugating enzyme]-L-cysteine + N(6)-ubiquitinyl-[acceptor protein]-L-lysine.. Functionally, E3 ubiquitin-protein ligase which promotes K48-linked polyubiquitination of protein methyltransferase PRMT1, leading to PRMT1 degradation. This suppresses methylation of the PRMT1 substrate MAP3K5/ASK1, promoting its activation and increasing MAP3K5-dependent cell death induced by oxidative stress. TRIM48-mediated ubiquitination of PRMT1 also suppresses methylation of FOXO1 by PRMT1, leading to inhibition of FOXO1 transcriptional activity. This is E3 ubiquitin-protein ligase TRIM48 from Homo sapiens (Human).